The following is a 227-amino-acid chain: tRNA (guanine-N(1)-)-methyltransferase (227 aa).

Residues Gly111 and 135 to 140 (LGDYVL) each bind S-adenosyl-L-methionine.

This sequence belongs to the RNA methyltransferase TrmD family. As to quaternary structure, homodimer.

It is found in the cytoplasm. The enzyme catalyses guanosine(37) in tRNA + S-adenosyl-L-methionine = N(1)-methylguanosine(37) in tRNA + S-adenosyl-L-homocysteine + H(+). Specifically methylates guanosine-37 in various tRNAs. In Leifsonia xyli subsp. xyli (strain CTCB07), this protein is tRNA (guanine-N(1)-)-methyltransferase.